We begin with the raw amino-acid sequence, 1024 residues long: MTMITDSLAVVLQRRDWENPGVTQLNRLAAHPPFASWRNSEEARTDRPSQQLRSLNGEWRFAWFPAPEAVPESWLECDLPEADTVVVPSNWQMHGYDAPIYTNVTYPITVNPPFVPTENPTGCYSLTFNVDESWLQEGQTRIIFDGVNSAFHLWCNGRWVGYGQDSRLPSEFDLSAFLRAGENRLAVMVLRWSDGSYLEDQDMWRMSGIFRDVSLLHKPTTQISDFHVATRFNDDFSRAVLEAEVQMCGELRDYLRVTVSLWQGETQVASGTAPFGGEIIDERGSYADRVTLRLNVENPKLWSAEIPNLYRAVVELHTADGTLIEAEACDVGFREVRIENGLLLLNGKPLLIRGVNRHEHHPLHGQVMDEQTMVQDILLMKQNNFNAVRCSHYPNHPLWYTLCDRYGLYVVDEANIETHGMVPMNRLTDDPRWLPAMSERVTRMVQRDRNHPSVIIWSLGNESGHGANHDALYRWIKSVDPSRPVQYEGGGADTTATDIICPMYARVDEDQPFPAVPKWSIKKWLSLPGETRPLILCEYAHAMGNSLGGFAKYWQAFRQYPRLQGGFVWDWVDQSLIKYDENGNPWSAYGGDFGDTPNDRQFCMNGLVFADRTPHPALTEAKHQQQFFQFRLSGQTIEVTSEYLFRHSDNELLHWMVALDGKPLASGEVPLDVAPQGKQLIELPELPQPESAGQLWLTVRVVQPNATAWSEAGHISAWQQWRLAENLSVTLPSASHIIPQLTTSETDFCIELGNKRWQFNRQSGLLSQMWIGDEKQLLTPLRDQFTRAPLDNDIGVSEATRIDPNAWVERWKAAGHYQAEAALLQCSADTLADAVLITTAHAWQHQGKTLFISRKTYRIDGSGQMAITVDVEVASDTPHPARIGLTCQLAQVAERVNWLGLGPQENYPDRLTAACFDRWDLPLSDMYTPYVFPSENGLRCGTRELNYGSHQWRGDFQFNISRYSQQQLMETSHRHLLHAEEGTWLNIDGFHMGIGGDDSWSPSVSAEFQLSAGRYHYQLVWCQK.

Substrate is bound by residues Asn-103 and Asp-202. Asp-202 contributes to the Na(+) binding site. Mg(2+) contacts are provided by Glu-417, His-419, and Glu-462. Substrate is bound by residues Glu-462 and 538–541 (EYAH). The active-site Proton donor is the Glu-462. Catalysis depends on Glu-538, which acts as the Nucleophile. Asn-598 contributes to the Mg(2+) binding site. 2 residues coordinate Na(+): Phe-602 and Asn-605. Positions 605 and 1000 each coordinate substrate.

This sequence belongs to the glycosyl hydrolase 2 family. Homotetramer. It depends on Mg(2+) as a cofactor. Na(+) is required as a cofactor.

It catalyses the reaction Hydrolysis of terminal non-reducing beta-D-galactose residues in beta-D-galactosides.. The chain is Beta-galactosidase from Escherichia coli O139:H28 (strain E24377A / ETEC).